We begin with the raw amino-acid sequence, 198 residues long: V-type ATP synthase subunit E (198 aa).

This sequence belongs to the V-ATPase E subunit family.

In terms of biological role, produces ATP from ADP in the presence of a proton gradient across the membrane. The polypeptide is V-type ATP synthase subunit E (Clostridium perfringens (strain ATCC 13124 / DSM 756 / JCM 1290 / NCIMB 6125 / NCTC 8237 / Type A)).